A 201-amino-acid chain; its full sequence is Syndecan-2 (201 aa).

A signal peptide spans 1–18 (MRRAWILLTLGLVACVSA). At 19–144 (ESRAELTSDK…HSDSLFKRTE (126 aa)) the chain is on the extracellular side. Serine 41, serine 55, and serine 57 each carry an O-linked (Xyl...) (glycosaminoglycan) serine glycan. Disordered stretches follow at residues 42–70 (GVYP…ELTT) and 90–130 (TLNI…DTNV). Polar residues predominate over residues 90 to 102 (TLNIQNKIPAQTK). Threonine 101 is a glycosylation site (O-linked (GalNAc...) threonine). Positions 103–123 (SPEETDKEKVHLSDSERKMDP) are enriched in basic and acidic residues. Position 115 is a phosphoserine; by FAM20C (serine 115). Residues 145 to 169 (VLAAVIAGGVIGFLFAIFLILLLVY) traverse the membrane as a helical segment. Topologically, residues 170 to 201 (RMRKKDEGSYDLGERKPSSAAYQKAPTKEFYA) are cytoplasmic. The segment at 178–201 (SYDLGERKPSSAAYQKAPTKEFYA) is disordered. Residue serine 187 is modified to Phosphoserine.

Belongs to the syndecan proteoglycan family. As to quaternary structure, interacts (via cytoplasmic domain) with SARM1. Forms a complex with SDCBP and PDCD6IP. O-glycosylated with core 1 or possibly core 8 glycans. Contains heparan sulfate. Also contains chondroitin sulfate.

The protein resides in the membrane. Its function is as follows. Cell surface proteoglycan which regulates dendritic arbor morphogenesis. This chain is Syndecan-2 (SDC2), found in Homo sapiens (Human).